Here is a 117-residue protein sequence, read N- to C-terminus: Large ribosomal subunit protein uL18 (117 aa).

The protein belongs to the universal ribosomal protein uL18 family. As to quaternary structure, part of the 50S ribosomal subunit; part of the 5S rRNA/L5/L18/L25 subcomplex. Contacts the 5S and 23S rRNAs.

This is one of the proteins that bind and probably mediate the attachment of the 5S RNA into the large ribosomal subunit, where it forms part of the central protuberance. In Vibrio vulnificus (strain CMCP6), this protein is Large ribosomal subunit protein uL18.